The primary structure comprises 88 residues: Kunitz-type conkunitzin-B1 (88 aa).

Residues 1 to 23 (MEGRRFAAVLILPICMLAPGAVA) form the signal peptide. The 51-residue stretch at 33-83 (CNLPAESGTGTQSLKRFYYNSDKMQCRTFIYKGNGGNDNNFPRTYDCQKKC) folds into the BPTI/Kunitz inhibitor domain. Intrachain disulfides connect C33-C83 and C58-C79. A Proline amide modification is found at P87.

It belongs to the venom Kunitz-type family. Contains 2 disulfide bonds instead of 3, as for all Kunitz domain proteins. Expressed by the venom duct.

It localises to the secreted. Its function is as follows. Blocks specifically voltage-activated potassium channels (Kv) of the Shaker family. The chain is Kunitz-type conkunitzin-B1 from Conus bullatus (Bubble cone).